The sequence spans 739 residues: Polyribonucleotide nucleotidyltransferase (739 aa).

Mg(2+) contacts are provided by Asp-488 and Asp-494. The KH domain maps to 555–614 (PKIVTLKINPDKIRDVIGPGGKVINGIIDETGVKIDIDQDGTVFIASTDQDGINHARQLI). The region spanning 624–692 (GEEFDGTVRR…DKGRVNASHK (69 aa)) is the S1 motif domain. The interval 698 to 739 (GMSPEDRAAYDEKKKTERDSRPPRRDTGSRPPRDGQRPPRRN) is disordered. The span at 701-739 (PEDRAAYDEKKKTERDSRPPRRDTGSRPPRDGQRPPRRN) shows a compositional bias: basic and acidic residues.

This sequence belongs to the polyribonucleotide nucleotidyltransferase family. Requires Mg(2+) as cofactor.

The protein resides in the cytoplasm. The enzyme catalyses RNA(n+1) + phosphate = RNA(n) + a ribonucleoside 5'-diphosphate. Involved in mRNA degradation. Catalyzes the phosphorolysis of single-stranded polyribonucleotides processively in the 3'- to 5'-direction. This chain is Polyribonucleotide nucleotidyltransferase, found in Exiguobacterium sibiricum (strain DSM 17290 / CCUG 55495 / CIP 109462 / JCM 13490 / 255-15).